The chain runs to 329 residues: MTCEVKEKGRVGTINPIFTCQPAGAQFVSIGIKDCIGIVHGGQGCVMFVRLIFSQHYKESFELASSSLHEDGAVFGPCGRVEEAVDVLLSRYPDVKVVPIITTCSTEIIGDDVDGVIKKLNEGLLKEKFPDREVHLIAMHTPSFVGSMISGYDVAVRDVVRHFAKREAPNDKINLLTGWVNPGDVKELKHLLGEMDIEANVLFEIESFDSPHSADGSLVSHGNTHHRGSDRHRQCPTFPEPLRRHQGRRVSAEEIRRSRRSSARPRSHPQYRHLPAEPEEGDGKPIPQSLAHERGVAIDALADLTHMFLAEKRVAIYGAPDLVIGLAEF.

Positions 20, 45, 104, and 143 each coordinate [8Fe-7S] cluster. Residues 213–288 (SADGSLVSHG…EEGDGKPIPQ (76 aa)) form a disordered region. The segment covering 257 to 271 (RSRRSSARPRSHPQY) has biased composition (basic residues).

Belongs to the NifD/NifK/NifE/NifN family. Hexamer of two alpha, two beta, and two delta chains. [8Fe-7S] cluster is required as a cofactor.

The enzyme catalyses N2 + 8 reduced [2Fe-2S]-[ferredoxin] + 16 ATP + 16 H2O = H2 + 8 oxidized [2Fe-2S]-[ferredoxin] + 2 NH4(+) + 16 ADP + 16 phosphate + 6 H(+). In terms of biological role, this iron-iron protein is part of the nitrogenase complex that catalyzes the key enzymatic reactions in nitrogen fixation. Other nitrogenase complexes utilize a molybdenum-iron protein or a vanadium-iron protein. The polypeptide is Nitrogenase iron-iron protein beta chain (anfK) (Ruminiclostridium hungatei (Clostridium hungatei)).